The chain runs to 79 residues: RNA-binding protein Hfq (79 aa).

A Sm domain is found at 10–70 (DVFLNTVRKQ…ISTIMPGQPV (61 aa)).

Belongs to the Hfq family. Homohexamer.

In terms of biological role, RNA chaperone that binds small regulatory RNA (sRNAs) and mRNAs to facilitate mRNA translational regulation in response to envelope stress, environmental stress and changes in metabolite concentrations. Also binds with high specificity to tRNAs. This chain is RNA-binding protein Hfq, found in Bartonella tribocorum (strain CIP 105476 / IBS 506).